A 413-amino-acid polypeptide reads, in one-letter code: Probable short/branched chain specific acyl-CoA dehydrogenase (413 aa).

FAD contacts are provided by residues 152–161 (FCLSESGSGS) and 186–188 (WIT). S161 provides a ligand contact to substrate. Substrate-binding positions include Y208, Y262, and 270–273 (NEGR). FAD contacts are provided by residues R298, Q309, and 366–370 (SMLGG). The active-site Proton acceptor is the E393. 395–397 (TSN) contacts FAD.

It belongs to the acyl-CoA dehydrogenase family. In terms of assembly, homotetramer. FAD is required as a cofactor.

The catalysed reaction is 2-methylbutanoyl-CoA + oxidized [electron-transfer flavoprotein] + H(+) = (2E)-2-methylbut-2-enoyl-CoA + reduced [electron-transfer flavoprotein]. It functions in the pathway lipid metabolism; mitochondrial fatty acid beta-oxidation. It participates in amino-acid degradation; L-isoleucine degradation. In terms of biological role, probable short and branched chain specific acyl-CoA dehydrogenase that catalyzes the removal of one hydrogen from C-2 and C-3 of the fatty acyl-CoA thioester, resulting in the formation of trans-2-enoyl-CoA. This is Probable short/branched chain specific acyl-CoA dehydrogenase (acadsb) from Dictyostelium discoideum (Social amoeba).